An 833-amino-acid chain; its full sequence is MTALRPLSGRSRSLRCSSEKMEGTGSWDVLEWTKLDSASWSGSYSNLDCLLESERIIFEACGVILINTDEAGTLLLSNFRILFLSEGTRKLVPLGTIPFVAIEKFNKLAPKVQSNKYHNNENAPTRLLQVTGKDMRIVVYGFRPGTKQRHTVVDTLLRCNKPERVWDLYAFTCGPSQFGNTNPKERLLNEYFRLLGKSSQRASMNMIEDGSFTLSNDLWRITNLNSNYDLCQSYPFALMVPKSISDEELLQTSTFRARCRLPVISWCHPGSGAVIARSSQPLVGLMMNMRSNSDEKLVASFCTQLAGHKGARRKLYIVDARPRKNALANGAKGGGSESSSNYLQSEIVFLGIDNIHAMRESFSRLRDYLDMHGTTSSDGTSSFLRHGGWTWGGGNLSSMSASVSVLGDSGWLSHIQSILAGVAWIAARVAMESASVLVHCSDGWDRTTQLVSLACLLLDPYYRTFSGFQALVEKDWLSFGHPFSDRVGMPNVSESGNFELPIQSSSARSFPSSPVRQSPGSAAAQSSSSSYGLNNYSPIFLQWLDCISQLMRMYPSAFEFSPTFLVDFIDCLLSCRFGNFLCNSEKERQQCGISETCGCIWAYLADLRSSSGTSHVHCNPFYDPSRYDGPLLPPAAALAPTLWPQFHLRWACPVEPNVTETEDQCRAMTVKYSEMKKEKEEAERKVDELSSAMESLNEELLNERDISRAARESAKRATKERAVISRAVQSLGCKVKFTRNGDCTVEVEDGPQKCSHSIPQKQSEDNTTDVSESISSVTEQNVCEAVCPLRTREGTCRWPDAGCARIGNQFLGLKTNFEAFDNLCVYDSYFTAE.

Positions 42 to 109 (GSYSNLDCLL…VAIEKFNKLA (68 aa)) constitute a GRAM domain. The 467-residue stretch at 181–647 (TNPKERLLNE…LAPTLWPQFH (467 aa)) folds into the Myotubularin phosphatase domain. Residues 329–332 (NGAK), 354–355 (NI), 440–446 (CSDGWDR), and R486 each bind substrate. The active-site Phosphocysteine intermediate is the C440. The tract at residues 503 to 530 (QSSSARSFPSSPVRQSPGSAAAQSSSSS) is disordered. Over residues 504 to 530 (SSSARSFPSSPVRQSPGSAAAQSSSSS) the composition is skewed to low complexity. Residues 660-717 (ETEDQCRAMTVKYSEMKKEKEEAERKVDELSSAMESLNEELLNERDISRAARESAKRA) are a coiled coil. Residues 753 to 772 (KCSHSIPQKQSEDNTTDVSE) are disordered.

This sequence belongs to the protein-tyrosine phosphatase family. Non-receptor class myotubularin subfamily. As to expression, mostly expressed in flowers and roots, and, to a lower extent, in siliques and leaves.

The protein localises to the cytoplasm. The enzyme catalyses a 1,2-diacyl-sn-glycero-3-phospho-(1D-myo-inositol-3-phosphate) + H2O = a 1,2-diacyl-sn-glycero-3-phospho-(1D-myo-inositol) + phosphate. The catalysed reaction is a 1,2-diacyl-sn-glycero-3-phospho-(1D-myo-inositol-3,5-bisphosphate) + H2O = a 1,2-diacyl-sn-glycero-3-phospho-(1D-myo-inositol-5-phosphate) + phosphate. Phosphatase with phosphoinositide 3'-phosphatase activity that can use phosphatidylinositol-3-phosphate (PtdIns3P) and phosphatidylinositol-3,5-diphosphate (PtdIns3,5P(2)) as substrates and produces phosphatidylinositol-5-phosphate (PtdIns5P); participates in pathway(s) that transfer gene regulatory signals to the nucleus. The sequence is that of Phosphatidylinositol-3-phosphatase myotubularin-2 (MTM2) from Arabidopsis thaliana (Mouse-ear cress).